A 126-amino-acid polypeptide reads, in one-letter code: Phosphoribosyl-ATP pyrophosphatase (126 aa).

This sequence belongs to the PRA-PH family.

The protein localises to the cytoplasm. The catalysed reaction is 1-(5-phospho-beta-D-ribosyl)-ATP + H2O = 1-(5-phospho-beta-D-ribosyl)-5'-AMP + diphosphate + H(+). The protein operates within amino-acid biosynthesis; L-histidine biosynthesis; L-histidine from 5-phospho-alpha-D-ribose 1-diphosphate: step 2/9. The polypeptide is Phosphoribosyl-ATP pyrophosphatase (Variovorax paradoxus (strain S110)).